A 344-amino-acid polypeptide reads, in one-letter code: Ketol-acid reductoisomerase (NADP(+)) (344 aa).

A KARI N-terminal Rossmann domain is found at 1–181 (MATMYYEQNI…GAARGGLLET (181 aa)). NADP(+) is bound by residues 25 to 28 (YGSQ), Arg-48, Ser-52, and 82 to 85 (DERQ). His-107 is a catalytic residue. Gly-133 is a binding site for NADP(+). The region spanning 182-327 (TFKEETETDL…AKLREMMPFI (146 aa)) is the KARI C-terminal knotted domain. Mg(2+) is bound by residues Asp-190, Glu-194, Glu-226, and Glu-230. Ser-251 lines the substrate pocket.

The protein belongs to the ketol-acid reductoisomerase family. The cofactor is Mg(2+).

The catalysed reaction is (2R)-2,3-dihydroxy-3-methylbutanoate + NADP(+) = (2S)-2-acetolactate + NADPH + H(+). The enzyme catalyses (2R,3R)-2,3-dihydroxy-3-methylpentanoate + NADP(+) = (S)-2-ethyl-2-hydroxy-3-oxobutanoate + NADPH + H(+). It participates in amino-acid biosynthesis; L-isoleucine biosynthesis; L-isoleucine from 2-oxobutanoate: step 2/4. It functions in the pathway amino-acid biosynthesis; L-valine biosynthesis; L-valine from pyruvate: step 2/4. In terms of biological role, involved in the biosynthesis of branched-chain amino acids (BCAA). Catalyzes an alkyl-migration followed by a ketol-acid reduction of (S)-2-acetolactate (S2AL) to yield (R)-2,3-dihydroxy-isovalerate. In the isomerase reaction, S2AL is rearranged via a Mg-dependent methyl migration to produce 3-hydroxy-3-methyl-2-ketobutyrate (HMKB). In the reductase reaction, this 2-ketoacid undergoes a metal-dependent reduction by NADPH to yield (R)-2,3-dihydroxy-isovalerate. In Lysinibacillus sphaericus (strain C3-41), this protein is Ketol-acid reductoisomerase (NADP(+)).